A 306-amino-acid chain; its full sequence is Elongation factor Ts (306 aa).

The interval 79–82 is involved in Mg(2+) ion dislocation from EF-Tu; it reads TDFV.

This sequence belongs to the EF-Ts family.

Its subcellular location is the cytoplasm. Its function is as follows. Associates with the EF-Tu.GDP complex and induces the exchange of GDP to GTP. It remains bound to the aminoacyl-tRNA.EF-Tu.GTP complex up to the GTP hydrolysis stage on the ribosome. This is Elongation factor Ts from Mesorhizobium japonicum (strain LMG 29417 / CECT 9101 / MAFF 303099) (Mesorhizobium loti (strain MAFF 303099)).